Reading from the N-terminus, the 447-residue chain is Serine--tRNA ligase (447 aa).

Residue 245 to 247 participates in L-serine binding; that stretch reads TAE. ATP-binding positions include 276 to 278 and V292; that span reads RKE. E299 contacts L-serine. Position 363–366 (363–366) interacts with ATP; sequence ELAS. An L-serine-binding site is contributed by T398.

The protein belongs to the class-II aminoacyl-tRNA synthetase family. Type-1 seryl-tRNA synthetase subfamily. Homodimer. The tRNA molecule binds across the dimer.

It localises to the cytoplasm. The catalysed reaction is tRNA(Ser) + L-serine + ATP = L-seryl-tRNA(Ser) + AMP + diphosphate + H(+). It carries out the reaction tRNA(Sec) + L-serine + ATP = L-seryl-tRNA(Sec) + AMP + diphosphate + H(+). The protein operates within aminoacyl-tRNA biosynthesis; selenocysteinyl-tRNA(Sec) biosynthesis; L-seryl-tRNA(Sec) from L-serine and tRNA(Sec): step 1/1. In terms of biological role, catalyzes the attachment of serine to tRNA(Ser). Is also able to aminoacylate tRNA(Sec) with serine, to form the misacylated tRNA L-seryl-tRNA(Sec), which will be further converted into selenocysteinyl-tRNA(Sec). The sequence is that of Serine--tRNA ligase from Pyrobaculum neutrophilum (strain DSM 2338 / JCM 9278 / NBRC 100436 / V24Sta) (Thermoproteus neutrophilus).